Consider the following 251-residue polypeptide: Ubiquinone/menaquinone biosynthesis C-methyltransferase UbiE (251 aa).

S-adenosyl-L-methionine is bound by residues threonine 74, aspartate 95, and 123-124; that span reads NA.

This sequence belongs to the class I-like SAM-binding methyltransferase superfamily. MenG/UbiE family.

It catalyses the reaction a 2-demethylmenaquinol + S-adenosyl-L-methionine = a menaquinol + S-adenosyl-L-homocysteine + H(+). The catalysed reaction is a 2-methoxy-6-(all-trans-polyprenyl)benzene-1,4-diol + S-adenosyl-L-methionine = a 5-methoxy-2-methyl-3-(all-trans-polyprenyl)benzene-1,4-diol + S-adenosyl-L-homocysteine + H(+). The protein operates within quinol/quinone metabolism; menaquinone biosynthesis; menaquinol from 1,4-dihydroxy-2-naphthoate: step 2/2. Its pathway is cofactor biosynthesis; ubiquinone biosynthesis. Methyltransferase required for the conversion of demethylmenaquinol (DMKH2) to menaquinol (MKH2) and the conversion of 2-polyprenyl-6-methoxy-1,4-benzoquinol (DDMQH2) to 2-polyprenyl-3-methyl-6-methoxy-1,4-benzoquinol (DMQH2). The polypeptide is Ubiquinone/menaquinone biosynthesis C-methyltransferase UbiE (Marinomonas sp. (strain MWYL1)).